The sequence spans 348 residues: Alcohol dehydrogenase 1 (348 aa).

7 residues coordinate Zn(2+): Cys44, His67, Cys98, Cys101, Cys104, Cys112, and Cys154. Residues 178-184 (GACGGLG), Asp202, Lys207, 269-271 (VGL), and Arg341 each bind NAD(+).

The protein belongs to the zinc-containing alcohol dehydrogenase family. In terms of assembly, homotetramer. The cofactor is Zn(2+).

The protein localises to the cytoplasm. The catalysed reaction is a primary alcohol + NAD(+) = an aldehyde + NADH + H(+). It catalyses the reaction a secondary alcohol + NAD(+) = a ketone + NADH + H(+). The sequence is that of Alcohol dehydrogenase 1 (ADH1) from Kluyveromyces marxianus (Yeast).